The primary structure comprises 117 residues: Large ribosomal subunit protein bL19 (117 aa).

This sequence belongs to the bacterial ribosomal protein bL19 family.

This protein is located at the 30S-50S ribosomal subunit interface and may play a role in the structure and function of the aminoacyl-tRNA binding site. The sequence is that of Large ribosomal subunit protein bL19 from Vibrio campbellii (strain ATCC BAA-1116).